The sequence spans 116 residues: Evasin P1180 (116 aa).

The N-terminal stretch at 1-25 is a signal peptide; sequence MARNWSFRVIFVSAMWCALLKFATL. 4 disulfide bridges follow: C38-C58, C54-C95, C71-C100, and C90-C109. N-linked (GlcNAc...) asparagine glycosylation is found at N45, N73, and N104.

The protein resides in the secreted. Salivary chemokine-binding protein which binds to host chemokines CCL2, CCL3, CCL4, CCL8 and CCL18. The polypeptide is Evasin P1180 (Amblyomma triste (Neotropical tick)).